We begin with the raw amino-acid sequence, 1939 residues long: Myosin-4 (1939 aa).

Residues Asp33–Pro82 form the Myosin N-terminal SH3-like domain. Position 36 is a phosphoserine (Ser36). Thr64 and Thr69 each carry phosphothreonine. Residue Ser79 is modified to Phosphoserine. One can recognise a Myosin motor domain in the interval Asp86–Asp782. Lys130 carries the post-translational modification N6,N6,N6-trimethyllysine. Gly179 to Thr186 contacts ATP. Tyr389 carries the phosphotyrosine modification. Residue Thr391 is modified to Phosphothreonine. Phosphoserine is present on Ser392. The residue at position 419 (Thr419) is a Phosphothreonine. Tyr424 carries the post-translational modification Phosphotyrosine. Ser625 bears the Phosphoserine mark. Positions Leu659 to Glu681 are actin-binding. His757 carries the post-translational modification Pros-methylhistidine. The segment at Lys761 to Gly775 is actin-binding. The residue at position 776 (Thr776) is a Phosphothreonine. The IQ domain maps to Leu785 to Ser814. The stretch at Leu843 to Glu1939 forms a coiled coil. 2 positions are modified to phosphoserine: Ser1092 and Ser1096. Disordered stretches follow at residues Ala1128 to Leu1147 and Arg1153 to Glu1172. A phosphoserine mark is found at Ser1162 and Ser1237. Thr1241 carries the post-translational modification Phosphothreonine. Ser1243 bears the Phosphoserine mark. Residue Thr1255 is modified to Phosphothreonine. Ser1261 is modified (phosphoserine). The residue at position 1265 (Thr1265) is a Phosphothreonine. A disordered region spans residues Glu1276 to Asp1299. Residue Ser1278 is modified to Phosphoserine. Residues Leu1284–Asp1299 are compositionally biased toward basic and acidic residues. Thr1286 is subject to Phosphothreonine. Phosphoserine is present on residues Ser1288, Ser1292, Ser1303, Ser1306, and Ser1413. Residue Tyr1464 is modified to Phosphotyrosine. Thr1467 bears the Phosphothreonine mark. Ser1474 carries the phosphoserine modification. Tyr1492 is modified (phosphotyrosine). Residue Ser1495 is modified to Phosphoserine. Thr1501 carries the post-translational modification Phosphothreonine. A Phosphoserine modification is found at Ser1514. Thr1517 bears the Phosphothreonine mark. Phosphoserine is present on residues Ser1542, Ser1547, Ser1554, Ser1574, Ser1600, Ser1603, Ser1714, and Ser1726. Phosphothreonine occurs at positions 1730 and 1736. A Phosphoserine modification is found at Ser1739.

The protein belongs to the TRAFAC class myosin-kinesin ATPase superfamily. Myosin family. As to quaternary structure, muscle myosin is a hexameric protein that consists of 2 heavy chain subunits (MHC), 2 alkali light chain subunits (MLC) and 2 regulatory light chain subunits (MLC-2). In terms of tissue distribution, expressed in type 2b myofibers in the tibialis anterior muscle (at protein level).

The protein localises to the cytoplasm. Its subcellular location is the myofibril. Functionally, muscle contraction. This is Myosin-4 (Myh4) from Mus musculus (Mouse).